The following is a 422-amino-acid chain: uncharacterized protein (422 aa).

The region spanning cysteine 5 to alanine 83 is the RRM domain. The tract at residues arginine 337–glutamine 358 is disordered.

Its subcellular location is the nucleus. This is an uncharacterized protein from Schizosaccharomyces pombe (strain 972 / ATCC 24843) (Fission yeast).